The chain runs to 2038 residues: Fer-1-like protein 5 (2038 aa).

C2 domains are found at residues 1–100 (MLRV…MFVR), 145–265 (TQKK…TLLR), 307–424 (QNTR…QGMY), 1055–1186 (TPED…FTPL), 1225–1345 (IPCK…SLNY), 1467–1587 (PKPP…ARCG), and 1705–1853 (GPPG…KQCS). The Ca(2+) site is built by D1502, D1508, D1557, F1558, D1559, D1565, D1824, S1827, and D1830. A helical transmembrane segment spans residues 1961 to 1981 (IICLVVTLVIGFILLNFVYSA).

Belongs to the ferlin family. In terms of assembly, interacts (via second C2 domain) with EHD1 and EHD2. It depends on Ca(2+) as a cofactor. In terms of tissue distribution, expressed in differentiating myoblasts and myotubes.

The protein resides in the cell membrane. It localises to the membrane. In terms of biological role, plays a role in myoblast fusion; probable mediator of endocytic recycling for membrane trafficking events during myotube formation. This Mus musculus (Mouse) protein is Fer-1-like protein 5 (Fer1l5).